We begin with the raw amino-acid sequence, 219 residues long: MGVPVVADSWHSFPHTSILPEEPTMFAGPPIGAVCPFAGQVAPISSSVNTIWSNTPCASSGEAAGTNAEAPISYVEAQGWMLCDGRYLRAAVYPELYAVLGGLYGERNSTADLEFRIPDYRGLFLRGFDAGGGMDPDAKRRLDPTGNNVANVVGSLQCDALQVHAHPYEITTPAGISQQGNAAGTSISSKSTGSPENPARTALETRPKNVAVNYLIKFR.

Polar residues predominate over residues Ala-174 to Pro-195. Positions Ala-174–Thr-201 are disordered.

Its function is as follows. May be involved in plant-microbe interaction. This is Protein RhiB (rhiB) from Rhizobium leguminosarum bv. viciae.